We begin with the raw amino-acid sequence, 1044 residues long: Probable translation initiation factor IF-2 (1044 aa).

The 93-residue stretch at 173 to 265 folds into the DOD-type homing endonuclease domain; that stretch reads FAGTIFGREN…LSLILLRLGI (93 aa). Residues 451-668 enclose the tr-type G domain; sequence TTETHNFIAN…LIAGLSQKYL (218 aa). GTP is bound by residues 524–528 and 578–581; these read DTPGH and NKID.

The protein belongs to the TRAFAC class translation factor GTPase superfamily. Classic translation factor GTPase family. IF-2 subfamily. In terms of processing, this protein undergoes a protein self splicing that involves a post-translational excision of the intervening region (intein) followed by peptide ligation.

Functionally, function in general translation initiation by promoting the binding of the formylmethionine-tRNA to ribosomes. Seems to function along with eIF-2. This is Probable translation initiation factor IF-2 (infB) from Pyrococcus horikoshii (strain ATCC 700860 / DSM 12428 / JCM 9974 / NBRC 100139 / OT-3).